A 365-amino-acid polypeptide reads, in one-letter code: Histidinol-phosphate aminotransferase (365 aa).

N6-(pyridoxal phosphate)lysine is present on K221.

This sequence belongs to the class-II pyridoxal-phosphate-dependent aminotransferase family. Histidinol-phosphate aminotransferase subfamily. As to quaternary structure, homodimer. It depends on pyridoxal 5'-phosphate as a cofactor.

It carries out the reaction L-histidinol phosphate + 2-oxoglutarate = 3-(imidazol-4-yl)-2-oxopropyl phosphate + L-glutamate. It functions in the pathway amino-acid biosynthesis; L-histidine biosynthesis; L-histidine from 5-phospho-alpha-D-ribose 1-diphosphate: step 7/9. In Rhodopseudomonas palustris (strain HaA2), this protein is Histidinol-phosphate aminotransferase.